The chain runs to 669 residues: Elongation factor G-like protein (669 aa).

A tr-type G domain is found at 7–279 (ESLRNVAIVG…VLIKEAPDPS (273 aa)). The interval 16-23 (GPYGSGKT) is G1. 16 to 23 (GPYGSGKT) is a GTP binding site. The tract at residues 59-63 (QMSVE) is G2. The segment at 80-83 (DCPG) is G3. Residues 80–84 (DCPGS) and 134–137 (NKMD) contribute to the GTP site. The G4 stretch occupies residues 134-137 (NKMD). The tract at residues 257–259 (AAE) is G5.

This sequence belongs to the TRAFAC class translation factor GTPase superfamily. Classic translation factor GTPase family. EF-G/EF-2 subfamily.

This chain is Elongation factor G-like protein, found in Synechocystis sp. (strain ATCC 27184 / PCC 6803 / Kazusa).